A 215-amino-acid chain; its full sequence is Pyrophosphatase PpaX (215 aa).

Residue D9 is the Nucleophile of the active site.

Belongs to the HAD-like hydrolase superfamily. PpaX family. Requires Mg(2+) as cofactor.

The enzyme catalyses diphosphate + H2O = 2 phosphate + H(+). Functionally, hydrolyzes pyrophosphate formed during P-Ser-HPr dephosphorylation by HPrK/P. Might play a role in controlling the intracellular pyrophosphate pool. The chain is Pyrophosphatase PpaX from Halalkalibacterium halodurans (strain ATCC BAA-125 / DSM 18197 / FERM 7344 / JCM 9153 / C-125) (Bacillus halodurans).